The sequence spans 264 residues: Phosphate import ATP-binding protein PstB (264 aa).

The region spanning 11–250 is the ABC transporter domain; it reads LKAEALSVYY…DTTEKIFDSP (240 aa). 43–50 contributes to the ATP binding site; the sequence is GPSGCGKS.

This sequence belongs to the ABC transporter superfamily. Phosphate importer (TC 3.A.1.7) family. In terms of assembly, the complex is composed of two ATP-binding proteins (PstB), two transmembrane proteins (PstC and PstA) and a solute-binding protein (PstS).

The protein resides in the cell inner membrane. It catalyses the reaction phosphate(out) + ATP + H2O = ADP + 2 phosphate(in) + H(+). Its function is as follows. Part of the ABC transporter complex PstSACB involved in phosphate import. Responsible for energy coupling to the transport system. In Synechococcus elongatus (strain ATCC 33912 / PCC 7942 / FACHB-805) (Anacystis nidulans R2), this protein is Phosphate import ATP-binding protein PstB.